The primary structure comprises 101 residues: Aspartyl/glutamyl-tRNA(Asn/Gln) amidotransferase subunit C (101 aa).

Belongs to the GatC family. Heterotrimer of A, B and C subunits.

It catalyses the reaction L-glutamyl-tRNA(Gln) + L-glutamine + ATP + H2O = L-glutaminyl-tRNA(Gln) + L-glutamate + ADP + phosphate + H(+). It carries out the reaction L-aspartyl-tRNA(Asn) + L-glutamine + ATP + H2O = L-asparaginyl-tRNA(Asn) + L-glutamate + ADP + phosphate + 2 H(+). Its function is as follows. Allows the formation of correctly charged Asn-tRNA(Asn) or Gln-tRNA(Gln) through the transamidation of misacylated Asp-tRNA(Asn) or Glu-tRNA(Gln) in organisms which lack either or both of asparaginyl-tRNA or glutaminyl-tRNA synthetases. The reaction takes place in the presence of glutamine and ATP through an activated phospho-Asp-tRNA(Asn) or phospho-Glu-tRNA(Gln). The polypeptide is Aspartyl/glutamyl-tRNA(Asn/Gln) amidotransferase subunit C (Lactococcus lactis subsp. cremoris (strain MG1363)).